A 728-amino-acid polypeptide reads, in one-letter code: 1,4-alpha-glucan branching enzyme GlgB (728 aa).

Catalysis depends on D405, which acts as the Nucleophile. E458 (proton donor) is an active-site residue.

Belongs to the glycosyl hydrolase 13 family. GlgB subfamily. As to quaternary structure, monomer.

It catalyses the reaction Transfers a segment of a (1-&gt;4)-alpha-D-glucan chain to a primary hydroxy group in a similar glucan chain.. It participates in glycan biosynthesis; glycogen biosynthesis. Functionally, catalyzes the formation of the alpha-1,6-glucosidic linkages in glycogen by scission of a 1,4-alpha-linked oligosaccharide from growing alpha-1,4-glucan chains and the subsequent attachment of the oligosaccharide to the alpha-1,6 position. This chain is 1,4-alpha-glucan branching enzyme GlgB, found in Shigella boydii serotype 4 (strain Sb227).